Here is an 87-residue protein sequence, read N- to C-terminus: Large ribosomal subunit protein bL31B (87 aa).

It belongs to the bacterial ribosomal protein bL31 family. Type B subfamily. As to quaternary structure, part of the 50S ribosomal subunit.

The polypeptide is Large ribosomal subunit protein bL31B (Halorhodospira halophila (strain DSM 244 / SL1) (Ectothiorhodospira halophila (strain DSM 244 / SL1))).